Reading from the N-terminus, the 695-residue chain is Elongation factor G (695 aa).

The tr-type G domain occupies 5-280 (SHYRNIGIFA…AVIDFLPSPT (276 aa)). GTP-binding positions include 14-21 (AHVDAGKT), 78-82 (DTPGH), and 132-135 (NKLD). The interval 279 to 299 (PTEVDPQPLTDEETGEPTGEV) is disordered.

Belongs to the TRAFAC class translation factor GTPase superfamily. Classic translation factor GTPase family. EF-G/EF-2 subfamily.

The protein localises to the cytoplasm. In terms of biological role, catalyzes the GTP-dependent ribosomal translocation step during translation elongation. During this step, the ribosome changes from the pre-translocational (PRE) to the post-translocational (POST) state as the newly formed A-site-bound peptidyl-tRNA and P-site-bound deacylated tRNA move to the P and E sites, respectively. Catalyzes the coordinated movement of the two tRNA molecules, the mRNA and conformational changes in the ribosome. The protein is Elongation factor G of Alteromonas mediterranea (strain DSM 17117 / CIP 110805 / LMG 28347 / Deep ecotype).